The following is a 295-amino-acid chain: Fatty acyl-CoA reductase (295 aa).

21–28 (TGASSGIG) contributes to the NADP(+) binding site. Residue Ser-153 coordinates substrate. The active-site Proton acceptor is Tyr-166.

This sequence belongs to the short-chain dehydrogenases/reductases (SDR) family.

It catalyses the reaction hexadecanal + NADP(+) + CoA = hexadecanoyl-CoA + NADPH + H(+). Functionally, catalyzes the NADPH-dependent reduction of long chain acyl-CoA (with chain lengths of 14 to 22 carbons) to the corresponding aldehyde. This is Fatty acyl-CoA reductase (acr1) from Acinetobacter baylyi (strain ATCC 33305 / BD413 / ADP1).